A 302-amino-acid chain; its full sequence is Nucleotide-binding protein SERP0433 (302 aa).

18-25 provides a ligand contact to ATP; it reads GMSGAGKS. GTP is bound at residue 69–72; the sequence is DLRG.

The protein belongs to the RapZ-like family.

Functionally, displays ATPase and GTPase activities. The chain is Nucleotide-binding protein SERP0433 from Staphylococcus epidermidis (strain ATCC 35984 / DSM 28319 / BCRC 17069 / CCUG 31568 / BM 3577 / RP62A).